Consider the following 556-residue polypeptide: 2-succinyl-5-enolpyruvyl-6-hydroxy-3-cyclohexene-1-carboxylate synthase (556 aa).

This sequence belongs to the TPP enzyme family. MenD subfamily. As to quaternary structure, homodimer. Requires Mg(2+) as cofactor. The cofactor is Mn(2+). Thiamine diphosphate is required as a cofactor.

It catalyses the reaction isochorismate + 2-oxoglutarate + H(+) = 5-enolpyruvoyl-6-hydroxy-2-succinyl-cyclohex-3-ene-1-carboxylate + CO2. The protein operates within quinol/quinone metabolism; 1,4-dihydroxy-2-naphthoate biosynthesis; 1,4-dihydroxy-2-naphthoate from chorismate: step 2/7. It functions in the pathway quinol/quinone metabolism; menaquinone biosynthesis. In terms of biological role, catalyzes the thiamine diphosphate-dependent decarboxylation of 2-oxoglutarate and the subsequent addition of the resulting succinic semialdehyde-thiamine pyrophosphate anion to isochorismate to yield 2-succinyl-5-enolpyruvyl-6-hydroxy-3-cyclohexene-1-carboxylate (SEPHCHC). In Salmonella arizonae (strain ATCC BAA-731 / CDC346-86 / RSK2980), this protein is 2-succinyl-5-enolpyruvyl-6-hydroxy-3-cyclohexene-1-carboxylate synthase.